Reading from the N-terminus, the 163-residue chain is Phosphopantetheine adenylyltransferase (163 aa).

A substrate-binding site is contributed by T11. Residues 11 to 12 (TF) and H19 each bind ATP. The substrate site is built by K43, L75, and R89. ATP contacts are provided by residues 90-92 (GLR), E100, and 125-131 (YSFISST).

The protein belongs to the bacterial CoaD family. As to quaternary structure, homohexamer. Mg(2+) is required as a cofactor.

It is found in the cytoplasm. It carries out the reaction (R)-4'-phosphopantetheine + ATP + H(+) = 3'-dephospho-CoA + diphosphate. It participates in cofactor biosynthesis; coenzyme A biosynthesis; CoA from (R)-pantothenate: step 4/5. In terms of biological role, reversibly transfers an adenylyl group from ATP to 4'-phosphopantetheine, yielding dephospho-CoA (dPCoA) and pyrophosphate. The protein is Phosphopantetheine adenylyltransferase of Acinetobacter baylyi (strain ATCC 33305 / BD413 / ADP1).